Here is a 492-residue protein sequence, read N- to C-terminus: Bifunctional purine biosynthesis protein PurH (492 aa).

Residues 1–144 enclose the MGS-like domain; the sequence is MKKAILSVSN…KNFKHVITVV (144 aa).

Belongs to the PurH family.

The enzyme catalyses (6R)-10-formyltetrahydrofolate + 5-amino-1-(5-phospho-beta-D-ribosyl)imidazole-4-carboxamide = 5-formamido-1-(5-phospho-D-ribosyl)imidazole-4-carboxamide + (6S)-5,6,7,8-tetrahydrofolate. The catalysed reaction is IMP + H2O = 5-formamido-1-(5-phospho-D-ribosyl)imidazole-4-carboxamide. Its pathway is purine metabolism; IMP biosynthesis via de novo pathway; 5-formamido-1-(5-phospho-D-ribosyl)imidazole-4-carboxamide from 5-amino-1-(5-phospho-D-ribosyl)imidazole-4-carboxamide (10-formyl THF route): step 1/1. The protein operates within purine metabolism; IMP biosynthesis via de novo pathway; IMP from 5-formamido-1-(5-phospho-D-ribosyl)imidazole-4-carboxamide: step 1/1. The sequence is that of Bifunctional purine biosynthesis protein PurH from Staphylococcus saprophyticus subsp. saprophyticus (strain ATCC 15305 / DSM 20229 / NCIMB 8711 / NCTC 7292 / S-41).